The primary structure comprises 781 residues: Cytosolic phospholipase A2 beta (781 aa).

Residues 1 to 112 (MAVAEVSRTC…RAGEFRRESF (112 aa)) enclose the C2 domain. Positions 26, 32, 82, 84, and 90 each coordinate Ca(2+). The PLA2c domain occupies 246-781 (EAGLRELAVR…VQRRRQRRPH (536 aa)). The active-site Nucleophile is the Ser-335. The Proton acceptor role is filled by Asp-615.

Ca(2+) serves as cofactor. Widely expressed. Expressed at higher level in brain, heart, liver, cerebellum and pancreas.

The protein resides in the cytoplasm. The protein localises to the cytosol. Its subcellular location is the mitochondrion membrane. It is found in the early endosome membrane. The enzyme catalyses a 1,2-diacyl-sn-glycero-3-phosphocholine + H2O = a 1-acyl-sn-glycero-3-phosphocholine + a fatty acid + H(+). The catalysed reaction is a 1-acyl-sn-glycero-3-phosphocholine + H2O = sn-glycerol 3-phosphocholine + a fatty acid + H(+). It catalyses the reaction 1-hexadecanoyl-2-(9Z,12Z-octadecadienoyl)-sn-glycero-3-phosphoethanolamine + H2O = 1-hexadecanoyl-sn-glycero-3-phosphoethanolamine + (9Z,12Z)-octadecadienoate + H(+). It carries out the reaction 1-hexadecanoyl-2-(5Z,8Z,11Z,14Z-eicosatetraenoyl)-sn-glycero-3-phosphoethanolamine + H2O = 1-hexadecanoyl-sn-glycero-3-phosphoethanolamine + (5Z,8Z,11Z,14Z)-eicosatetraenoate + H(+). The enzyme catalyses 1-hexadecanoyl-sn-glycero-3-phosphocholine + H2O = sn-glycerol 3-phosphocholine + hexadecanoate + H(+). The catalysed reaction is 1-hexadecanoyl-2-(5Z,8Z,11Z,14Z-eicosatetraenoyl)-sn-glycero-3-phosphocholine + H2O = 1-hexadecanoyl-sn-glycero-3-phosphocholine + (5Z,8Z,11Z,14Z)-eicosatetraenoate + H(+). It catalyses the reaction 1-hexadecanoyl-2-(5Z,8Z,11Z,14Z-eicosatetraenoyl)-sn-glycero-3-phosphocholine + H2O = 2-(5Z,8Z,11Z,14Z)-eicosatetraenoyl-sn-glycero-3-phosphocholine + hexadecanoate + H(+). Stimulated by cytosolic Ca(2+). In terms of biological role, calcium-dependent phospholipase A1 and A2 and lysophospholipase that may play a role in membrane phospholipid remodeling. Calcium-dependent phospholipase A2 and lysophospholipase. Cleaves the ester bond of the fatty acyl group attached to the sn-2 position of phosphatidylethanolamines, producing lysophospholipids that may be used in deacylation-reacylation cycles. Hydrolyzes lysophosphatidylcholines with low efficiency but is inefficient toward phosphatidylcholines. Functionally, calcium-dependent phospholipase A1 and A2 and lysophospholipase. Cleaves the ester bond of the fatty acyl group attached to the sn-1 or sn-2 position of diacyl phospholipids (phospholipase A1 and A2 activity, respectively), producing lysophospholipids that may be used in deacylation-reacylation cycles. Can further hydrolyze lysophospholipids enabling complete deacylation. Has no activity toward alkylacyl phospholipids. The protein is Cytosolic phospholipase A2 beta (PLA2G4B) of Homo sapiens (Human).